A 357-amino-acid chain; its full sequence is Membrane-bound lytic murein transglycosylase C (357 aa).

The signal sequence occupies residues 1–15; the sequence is MKKYLLLALLPFLYA. C16 is lipidated: N-palmitoyl cysteine. C16 carries S-diacylglycerol cysteine lipidation.

This sequence belongs to the transglycosylase Slt family.

The protein resides in the cell outer membrane. The catalysed reaction is Exolytic cleavage of the (1-&gt;4)-beta-glycosidic linkage between N-acetylmuramic acid (MurNAc) and N-acetylglucosamine (GlcNAc) residues in peptidoglycan, from either the reducing or the non-reducing ends of the peptidoglycan chains, with concomitant formation of a 1,6-anhydrobond in the MurNAc residue.. Murein-degrading enzyme. May play a role in recycling of muropeptides during cell elongation and/or cell division. The polypeptide is Membrane-bound lytic murein transglycosylase C (Haemophilus influenzae (strain PittEE)).